Consider the following 194-residue polypeptide: MKSMYAYIREAWKRPYEGYVGELMWHRLQKWRREPAVVRIPRPTRLDRARALGYKAKKGIIVVRVRIRRGGRRATRPNKGRKSKGLMVNRRTPKKNLQWIAEERANRKYPNMEVLNSYWVGEDGRYKWFEVILVDRDHPAIKSDPQLSWVSRTRGRVYRGLTSAGRKARGLRRKGRGAEKVRPSLRANFRKKRR.

Residues 164-194 (AGRKARGLRRKGRGAEKVRPSLRANFRKKRR) are disordered. The span at 166–175 (RKARGLRRKG) shows a compositional bias: basic residues.

It belongs to the eukaryotic ribosomal protein eL15 family.

The polypeptide is Large ribosomal subunit protein eL15 (rpl15e) (Archaeoglobus fulgidus (strain ATCC 49558 / DSM 4304 / JCM 9628 / NBRC 100126 / VC-16)).